The primary structure comprises 335 residues: Homeobox protein DBX1 (335 aa).

Disordered regions lie at residues 56–102 (RSIP…LSPA) and 240–335 (KERE…ITVS). Over residues 83–95 (GSPGSGSRRGSSP) the composition is skewed to low complexity. Residues 181 to 240 (GMLRRAVFSDVQRKALEKTFQKQKYISKPDRKKLASKLGLKDSQVKIWFQNRRMKWRNSK) constitute a DNA-binding region (homeobox). Low complexity predominate over residues 299-317 (GPLPASPAHSSSPGKPSDF). Acidic residues predominate over residues 318–335 (SDSDEDEEGEEDEEITVS).

This sequence belongs to the H2.0 homeobox family.

It localises to the nucleus. Functionally, could have a role in patterning the central nervous system during embryogenesis. Has a key role in regulating the distinct phenotypic features that distinguish two major classes of ventral interneurons, V0 and V1 neurons. Regulates the transcription factor profile, neurotransmitter phenotype, intraspinal migratory path and axonal trajectory of V0 neurons, features that differentiate them from an adjacent set of V1 neurons. This chain is Homeobox protein DBX1 (Dbx1), found in Rattus norvegicus (Rat).